The primary structure comprises 484 residues: MKKRKELNALIGLAGDHRRKKTKQGSGSHRLLRTEPPDSDSESSTDEEEFGAIGNRSRFVKGDYARCCKICCPLCAFVILAACVVASVGLVWMQMALKEDLDVLKEKFRTMESNQKSSFQEIPKLNEELLSKQKQLEKIESGELGLSRVWINITEMNKQISLLSSAVNHLKASVKSAADLLSLPSTVEGLQKSVASIGNTLNSVHLAVEVIQKTVDEHRTTLGLLQGSMENNGSNQILPSPSPPSELDNKSHSESAKQDILYLHNSLEEVNSTVVEYQRQNDLKLKGMSETLSNLTQRLSLIESHVVALSKAEQRTNVSSSTMENRAATLKRESLVTNRSDTVQAQSMKKEDNSNSQVSELREKLQLISALTNKPESNRPPETTDEEQVQNFTSDPSALPEFSQLLRNQIETQVKPLSLPGISSIKDLQDLFHKTGQDVDGMLTYQELWNSLGSAMPRPESLRAFDSNGDGRYSFLELRLALGI.

Disordered regions lie at residues 1–48 (MKKR…TDEE), 227–255 (GSME…HSES), and 313–395 (EQRT…FTSD). Positions 37-48 (PDSDSESSTDEE) are enriched in acidic residues. 3 stretches are compositionally biased toward polar residues: residues 228-239 (SMENNGSNQILP), 315-324 (RTNVSSSTME), and 335-347 (LVTN…QAQS). 2 consecutive EF-hand domains span residues 423 to 452 (SSIK…WNSL) and 453 to 484 (GSAM…ALGI). Ca(2+)-binding residues include Asp-466, Asn-468, Asp-470, Arg-472, and Glu-477.

The sequence is that of EF-hand calcium-binding domain-containing protein 14 (Efcab14) from Mus musculus (Mouse).